The following is a 528-amino-acid chain: Phosphoenolpyruvate carboxykinase (ATP) (528 aa).

Residues arginine 54, tyrosine 190, and lysine 196 each coordinate substrate. Residues lysine 196, histidine 215, and 231 to 239 (GLSGTGKTT) each bind ATP. Positions 196 and 215 each coordinate Mn(2+). Position 252 (aspartate 252) interacts with Mn(2+). Residues glutamate 280, arginine 316, and threonine 441 each contribute to the ATP site. Arginine 316 is a substrate binding site.

It belongs to the phosphoenolpyruvate carboxykinase (ATP) family. It depends on Mn(2+) as a cofactor.

The protein resides in the cytoplasm. It catalyses the reaction oxaloacetate + ATP = phosphoenolpyruvate + ADP + CO2. It participates in carbohydrate biosynthesis; gluconeogenesis. Functionally, involved in the gluconeogenesis. Catalyzes the conversion of oxaloacetate (OAA) to phosphoenolpyruvate (PEP) through direct phosphoryl transfer between the nucleoside triphosphate and OAA. This Sulfurimonas denitrificans (strain ATCC 33889 / DSM 1251) (Thiomicrospira denitrificans (strain ATCC 33889 / DSM 1251)) protein is Phosphoenolpyruvate carboxykinase (ATP).